A 379-amino-acid chain; its full sequence is Cobalt-precorrin-5B C(1)-methyltransferase (379 aa).

It belongs to the CbiD family.

It carries out the reaction Co-precorrin-5B + S-adenosyl-L-methionine = Co-precorrin-6A + S-adenosyl-L-homocysteine. It functions in the pathway cofactor biosynthesis; adenosylcobalamin biosynthesis; cob(II)yrinate a,c-diamide from sirohydrochlorin (anaerobic route): step 6/10. Its function is as follows. Catalyzes the methylation of C-1 in cobalt-precorrin-5B to form cobalt-precorrin-6A. In Salmonella dublin (strain CT_02021853), this protein is Cobalt-precorrin-5B C(1)-methyltransferase.